We begin with the raw amino-acid sequence, 213 residues long: Probable lipid phosphate phosphatase beta (213 aa).

5 helical membrane-spanning segments follow: residues 30–50, 67–87, 118–138, 158–178, and 181–201; these read PFLPPFVLLLLEISADFRFSF, VPFLLGLLFDLIFVGIVKLIF, VFFVAASVHFFSAAAEASMTG, VEVVVVVWIWATVTAISRILL, and HYVLDVAAGAFLGIVEALFAL.

Belongs to the PA-phosphatase related phosphoesterase family.

It localises to the membrane. In Arabidopsis thaliana (Mouse-ear cress), this protein is Probable lipid phosphate phosphatase beta (LPPB).